Here is a 184-residue protein sequence, read N- to C-terminus: PLASMODESMATA CALLOSE-BINDING PROTEIN 3 (184 aa).

The first 19 residues, 1–19 (MAVFVLVMILLAMAGHSSG), serve as a signal peptide directing secretion. Cysteines 22 and 84 form a disulfide. Residues 109–146 (SGSGTTTPVTTTPSTRVPTTTNTRPYTITPSTGGGLGI) form a disordered region. Over residues 113 to 139 (TTTPVTTTPSTRVPTTTNTRPYTITPS) the composition is skewed to low complexity. Residue Ser158 is the site of GPI-anchor amidated serine attachment. Positions 159 to 184 (FGFKLQSPRFGFIVLFTLFLPFYLFS) are cleaved as a propeptide — removed in mature form.

In terms of processing, contains two additional disulfide bonds. In terms of tissue distribution, expressed in the shoot apical region and in young leaves but also detected in the laminar and vasculature of mature leaves.

The protein localises to the cell membrane. Its subcellular location is the cell junction. It is found in the plasmodesma. This Arabidopsis thaliana (Mouse-ear cress) protein is PLASMODESMATA CALLOSE-BINDING PROTEIN 3 (PDCB3).